Reading from the N-terminus, the 147-residue chain is Antiholin-like protein LrgA (147 aa).

Helical transmembrane passes span 12 to 32 (PAHFFHQVIVIALVLFVSKII), 35 to 55 (FMPIPMPGSVIGLVLLFVLLC), 74 to 94 (NIGLLFVPAGISVVNSLGVIS), and 98 to 118 (FLIIGLIIVSTILLLICTGYV).

It belongs to the CidA/LrgA family. LrgA subfamily.

The protein localises to the cell membrane. Inhibits the expression or activity of extracellular murein hydrolases by interacting, possibly with LrgB, with the holin-like proteins CidA and/or CidB. The LrgAB and CidAB proteins may affect the proton motive force of the membrane. May be involved in programmed cell death (PCD), possibly triggering PCD in response to antibiotics and environmental stresses. This chain is Antiholin-like protein LrgA, found in Staphylococcus aureus (strain MSSA476).